The chain runs to 241 residues: Small ribosomal subunit protein uS3 (241 aa).

Residues 39 to 109 form the KH type-2 domain; sequence IRQHVEKNLS…QIRINVIEVS (71 aa). The tract at residues 215-241 is disordered; it reads EQAMAAPAPTPRKKRRPQQFEDRSNEE. The span at 232–241 shows a compositional bias: basic and acidic residues; the sequence is QQFEDRSNEE.

The protein belongs to the universal ribosomal protein uS3 family. In terms of assembly, part of the 30S ribosomal subunit. Forms a tight complex with proteins S10 and S14.

In terms of biological role, binds the lower part of the 30S subunit head. Binds mRNA in the 70S ribosome, positioning it for translation. The protein is Small ribosomal subunit protein uS3 of Crocosphaera subtropica (strain ATCC 51142 / BH68) (Cyanothece sp. (strain ATCC 51142)).